Here is a 153-residue protein sequence, read N- to C-terminus: 3-hydroxyacyl-[acyl-carrier-protein] dehydratase FabZ (153 aa).

The active site involves His-56.

The protein belongs to the thioester dehydratase family. FabZ subfamily.

The protein resides in the cytoplasm. It carries out the reaction a (3R)-hydroxyacyl-[ACP] = a (2E)-enoyl-[ACP] + H2O. Functionally, involved in unsaturated fatty acids biosynthesis. Catalyzes the dehydration of short chain beta-hydroxyacyl-ACPs and long chain saturated and unsaturated beta-hydroxyacyl-ACPs. The protein is 3-hydroxyacyl-[acyl-carrier-protein] dehydratase FabZ of Nitrosomonas europaea (strain ATCC 19718 / CIP 103999 / KCTC 2705 / NBRC 14298).